A 482-amino-acid chain; its full sequence is MAVAAAAAARRRDVSCLLLLLCFSSSMAATGGGGGGGEQEADRVARLPGQPASPAVSQFAGYVGVDERHGRALFYWFFEAQASPAPEKKPLLLWLNGGPGCSSIGYGAASELGPLRVARQGAALEFNQYGWNKEANLLFLESPVGVGFSYTNTSSDLSNLNDDFVAEDAYSFLVNWFKRFPQYKDNEFYISGESYAGHYVPQLADLVYERNKDKRASTYINLKGFIVGNPLTDDYYDSKGLAEYAWSHAIVSDQVYERIKKTCNFKNSNWTDDCNAAMNIIFSQYNQIDIYNIYAPKCLLNSTSASSPDRAFFANNQEQFRWRIKMFSGYDPCYSSYAEDYFNKHDVQEAFHANASGLLPGKWQVCSDQILNSYNFSVLSILPIYSKLIKAGLRVWLYSGDADGRVPVISSRYCVEALGLPIKTDWQSWYLDKQVAGRFVEYHGMTMVTVRGAGHLVPLNKPAEGLMLINAFLHGEKLPTSR.

The N-terminal stretch at Met1 to Ala28 is a signal peptide. Cystine bridges form between Cys101–Cys366, Cys263–Cys274, and Cys298–Cys333. An N-linked (GlcNAc...) asparagine glycan is attached at Asn152. Ser194 is a catalytic residue. 4 N-linked (GlcNAc...) asparagine glycosylation sites follow: Asn269, Asn301, Asn354, and Asn375. Active-site residues include Asp403 and His455.

It belongs to the peptidase S10 family.

It localises to the secreted. Functionally, acts as a positive regulator of grain size by controlling grain width, filling and weight. High expression of GS5 in the grain is correlated with large grain size. This is Serine carboxypeptidase-like 26 from Oryza sativa subsp. japonica (Rice).